Here is a 714-residue protein sequence, read N- to C-terminus: Macrophage-expressed gene 1 protein (714 aa).

An N-terminal signal peptide occupies residues 1-19 (MNSFMAIALIWMMIACAEA). Positions 30-345 (GFQTCKDTLK…TAVRHYYTFN (316 aa)) constitute an MACPF domain. Cysteines 34 and 70 form a disulfide. The next 2 membrane-spanning stretches (beta stranded) occupy residues 113 to 120 (FSINTELS) and 127 to 132 (GKFSTE). Asn185 is a glycosylation site (N-linked (GlcNAc...) asparagine). 2 beta stranded membrane-spanning segments follow: residues 235 to 244 (TVTASAGIAF) and 248 to 256 (VNFKVETDH). N-linked (GlcNAc...) asparagine glycosylation is present at Asn269. Cys350 and Cys369 are disulfide-bonded. An N-linked (GlcNAc...) asparagine glycan is attached at Asn375. 5 disulfide bridges follow: Cys385–Cys394, Cys432–Cys446, Cys436–Cys442, Cys531–Cys569, and Cys554–Cys574. The P2 stretch occupies residues 410–653 (PSGYTPVHLL…GDGNGMSGGE (244 aa)). A helical membrane pass occupies residues 654–674 (AAGVTLGVIIALGIVITLAIY). The interval 690-714 (EQESLVGSFATDASPPNGEQDPCPA) is disordered.

It belongs to the MPEG1 family. In terms of assembly, homooligomer; predominantly forms a homooligomeric arc-shaped pore complex instead of complete rings of 16 subunits. Proteolytically processed in two steps to generate the Macrophage-expressed gene 1 protein, processed form: cleaved by trypsin in proximity of the helical transmembrane domain releases the ectodomain into the lysosomal lumen to orient the pore-forming domain toward the endogenous membranes, and processed by the asparagine endopeptidase (LGMN). Proteolytic processing in antigen-containing vesicles is pH-dependent. Post-translationally, monoubiquitinated in response to bacterial infection; ubiquitination is required for vesicular localization and antibacterial activity and can be blocked by bacterial cell cycle inhibiting factor (cif).

The protein resides in the cytoplasmic vesicle membrane. It localises to the cytoplasmic vesicle. It is found in the phagosome membrane. Forms arc- and ring-shaped pre-pores on top of the membrane at neutral to slightly acidic pH conditions and converts to pores upon acidification. Undergoes transition from the pre-pore to the pore in a processive clockwise hand-over-hand process. In the pore state, 2 alpha-helical regions refold into transmembrane hairpins (TMH1 and TMH2) in each protomer that form in the ensemble complex giant beta-barrel transmembrane pores. Its function is as follows. Pore-forming protein involved in both innate and adaptive immunity. Plays a central role in antigen cross-presentation in dendritic cells by forming a pore in antigen-containing compartments, thereby promoting delivery of antigens for cross-presentation. Also involved in innate immune response following bacterial infection; shows antibacterial activity against a wide spectrum of Gram-positive, Gram-negative and acid-fast bacteria. Reduces the viability of the intracytosolic pathogen L.monocytogenes by inhibiting acidification of the phagocytic vacuole of host cells which restricts bacterial translocation from the vacuole to the cytosol. Required for the antibacterial activity of reactive oxygen species and nitric oxide. Functionally, pore-forming protein that plays a central role in antigen cross-presentation in dendritic cells by mediating delivery of antigens for cross-presentation. Dendritic cells bridge innate and adaptive immunity by capturing exogenous antigens on MHC class-I molecules and presenting them to naive CD8(+) T-cells. Acts by forming a pore in antigen-containing compartments, promoting the release of antigens into the cytosol, enabling generation of MHCI:peptide complexes and T-cell priming. The protein is Macrophage-expressed gene 1 protein (Mpeg1) of Rattus norvegicus (Rat).